The sequence spans 84 residues: Putative defensin-like protein 139 (84 aa).

Positions 1-28 (MEPSNQIFFYLRRSKLLSGLGEIRMAKG) are cleaved as a signal peptide. Intrachain disulfides connect Cys37–Cys81, Cys46–Cys65, Cys51–Cys75, and Cys55–Cys77.

This sequence belongs to the DEFL family.

It is found in the secreted. This chain is Putative defensin-like protein 139 (LCR7), found in Arabidopsis thaliana (Mouse-ear cress).